A 1249-amino-acid chain; its full sequence is Apoptotic protease-activating factor 1 (1249 aa).

The CARD domain occupies 1–90 (MDAKARNCLL…KDLAGLLHSG (90 aa)). The region spanning 106 to 415 (NTSFVRTVLC…LETEEVEDIL (310 aa)) is the NB-ARC domain. Residues 154–161 (GMAGCGKS) and Arg-265 contribute to the ATP site. The stretch at 613–652 (PHTDAVYHACFSQDGQRIASCGADKTLQVFKAETGEKLLD) is one WD 1-1 repeat. The stretch at 655–694 (AHEDEVLCCAFSSDDSYIATCSVDKKVKIWDSGTGKLVHT) is one WD 1-2 repeat. Residues 697-738 (EHSEQVNCCHFTNKSNHLLLATGSNDSFLKLWDLNQKECRNT) form a WD 1-3 repeat. The WD 1-4 repeat unit spans residues 741-780 (GHTNSVTHCRFSPDDELLASCSADGTLKLWDVRSANEKKS). The WD 1-5 repeat unit spans residues 796–837 (DVEVIVKCCSWSADGDRIIVAAKNKVLLLDIHTSGLLTEIHT). The WD 1-6 repeat unit spans residues 838 to 877 (GHHSTIQYCDFSPYDHLAVIALSQYCVELWNIDSRVKVAD). One copy of the WD 1-7 repeat lies at 880 to 910 (GHLSWVHGVMFSPDGSSFLTASDDQTIRVWE). Positions 910 to 921 (ETRKVCKNSAIV) are interpropeller linker. A WD 2-1 repeat occupies 922–958 (LKQEIDVVFQENEMMVLAVDNIRGLQLIAGKTGQIDY). Residues 959 to 998 (LPEAQVSCCCLSPHLEYVAFGDEEGAIKIIELPNNRVFSS) form a WD 2-2 repeat. Residues 1001-1040 (GHKKAVRHIQFTADGKTLISSSEDSVIQVWNWQTEEYVFL) form a WD 2-3 repeat. The stretch at 1042-1080 (AHQETVKDFRLLRDSRLLSWSFDGTVKVWNVITGRIERD) is one WD 2-4 repeat. One copy of the WD 2-5 repeat lies at 1083–1122 (CHQGTVLSCAISSDATKFSSTSADKTAKIWSFELPSPLHE). The stretch at 1125–1164 (GHNSCVRCSAFSLDGILLATGDDNGEIRIWNVSDGQLLHL) is one WD 2-6 repeat. A WD 2-7 repeat occupies 1176–1213 (THGGWVTDVCFSPDRKMLVSAGGYLKWWNVVTGESSQT). A WD 2-8 repeat occupies 1214–1249 (FYTNGTNLKKIHVSPDFRTYVTVDNLGILYILQVLE).

In terms of assembly, monomer. Oligomerizes to a heptameric ring, known as the apoptosome, upon binding of cytochrome c and dATP. Oligomeric Apaf-1 and pro-caspase-9 bind to each other via their respective NH2-terminal CARD domains. Interacts with UACA. Interacts with APIP. Interacts (via CARD and NACHT domains) with NAIP/BIRC1 (via NACHT domain). Interacts with CIAO2A.

Its subcellular location is the cytoplasm. Its function is as follows. Regulates programmed cell death; necessary for normal brain development. Participates with pro-caspase-9 (Apaf-3) in the cytochrome c-dependent activation of caspase-3, leading to apoptosis. This activation requires ATP. This is Apoptotic protease-activating factor 1 (Apaf1) from Rattus norvegicus (Rat).